The primary structure comprises 451 residues: UPF0210 protein NMCC_1554 (451 aa).

Belongs to the UPF0210 family. Homodimer.

In Neisseria meningitidis serogroup C (strain 053442), this protein is UPF0210 protein NMCC_1554.